We begin with the raw amino-acid sequence, 308 residues long: MGSRSRILLIGATGYIGRHVAKASLDLGHPTFLLVRESTASSNSEKAQLLESFKASGANIVHGSIDDHASLVEAVKNVDVVISTVGSLQIESQVNIIKAIKEVGTVKRFFPSEFGNDVDNVHAVEPAKSVFEVKAKVRRAIEAEGIPYTYVSSNCFAGYFLRSLAQAGLTAPPRDKVVILGDGNARVVFVKEEDIGTFTIKAVDDPRTLNKTLYLRLPANTLSLNELVALWEKKIDKTLEKAYVPEEEVLKLIADTPFPANISIAISHSIFVKGDQTNFEIGPAGVEASQLYPDVKYTTVDEYLSNFV.

NADP(+) contacts are provided by residues 11–17 (GATGYIG), R36, and K46. K134 functions as the Proton acceptor in the catalytic mechanism. NADP(+) is bound at residue R138.

Belongs to the NmrA-type oxidoreductase family. Isoflavone reductase subfamily.

It catalyses the reaction (-)-dehydrodiconiferyl alcohol + NADPH + H(+) = (S)-isodihydrodehydrodiconiferyl alcohol + NADP(+). The catalysed reaction is (+)-dehydrodiconiferyl alcohol + NADPH + H(+) = (R)-isodihydrodehydrodiconiferyl alcohol + NADP(+). It carries out the reaction (2R,3S)-dihydrodehydrodiconiferyl alcohol + NADPH + H(+) = (S)-tetrahydrodehydrodiconiferyl alcohol + NADP(+). The enzyme catalyses (2S,3R)-dihydrodehydrodiconiferyl alcohol + NADPH + H(+) = (R)-tetrahydrodehydrodiconiferyl alcohol + NADP(+). Oxidoreductase involved in lignan biosynthesis. Catalyzes the NADPH-dependent reduction of phenylcoumaran benzylic ethers. Converts dehydrodiconiferyl alcohol (DDC) to isodihydrodehydrodiconiferyl alcohol (IDDDC), and dihydrodehydrodiconiferyl alcohol (DDDC) to tetrahydrodehydrodiconiferyl alcohol (TDDC). This Pinus taeda (Loblolly pine) protein is Phenylcoumaran benzylic ether reductase PT1.